Consider the following 468-residue polypeptide: Ribosomal protein uS12 methylthiotransferase RimO (468 aa).

Residues 16–130 (NKIHFISLGC…ILSAIESRES (115 aa)) enclose the MTTase N-terminal domain. Positions 25, 61, 93, 164, 168, and 171 each coordinate [4Fe-4S] cluster. In terms of domain architecture, Radical SAM core spans 150 to 382 (STPKHYAYLK…SQIQKRNVDK (233 aa)). Positions 385–455 (QKLIGEKIEA…GYDLVGRVVK (71 aa)) constitute a TRAM domain.

It belongs to the methylthiotransferase family. RimO subfamily. The cofactor is [4Fe-4S] cluster.

The protein localises to the cytoplasm. The catalysed reaction is L-aspartate(89)-[ribosomal protein uS12]-hydrogen + (sulfur carrier)-SH + AH2 + 2 S-adenosyl-L-methionine = 3-methylsulfanyl-L-aspartate(89)-[ribosomal protein uS12]-hydrogen + (sulfur carrier)-H + 5'-deoxyadenosine + L-methionine + A + S-adenosyl-L-homocysteine + 2 H(+). Catalyzes the methylthiolation of an aspartic acid residue of ribosomal protein uS12. In Chlamydia pneumoniae (Chlamydophila pneumoniae), this protein is Ribosomal protein uS12 methylthiotransferase RimO.